Reading from the N-terminus, the 512-residue chain is Neuronal acetylcholine receptor subunit alpha-3 (512 aa).

A signal peptide spans 1–23 (MNSASRITLFFLLTVLITQECLS). Over 24–242 (SKGEDRLFRR…PLFYTINLII (219 aa)) the chain is Extracellular. Asparagine 47 and asparagine 164 each carry an N-linked (GlcNAc...) asparagine glycan. Cystine bridges form between cysteine 151/cysteine 165 and cysteine 215/cysteine 216. The helical transmembrane segment at 243–258 (PCLLISFLTILVFYLP) threads the bilayer. Over 259-260 (SD) the chain is Cytoplasmic. A helical membrane pass occupies residues 261-277 (CGEKVTLCISVLLSLTV). Residue glutamate 263 participates in Na(+) binding. Residues 278–299 (FLLVITETIPSTSLVIPLIGEY) lie on the Extracellular side of the membrane. A helical membrane pass occupies residues 300-318 (LLFTMIFVTLSIVITVFVL). The Cytoplasmic portion of the chain corresponds to 319–482 (NVHYRTPMTH…EDDWKYVAMV (164 aa)). Residues 356 to 389 (ESSGKGGGEIAGSSGTGGGRGAEGKKMKSSASQQ) are disordered. Over residues 359-376 (GKGGGEIAGSSGTGGGRG) the composition is skewed to gly residues. The chain crosses the membrane as a helical span at residues 483–501 (IDRIFLWVFVLVCVLGTLG). Over 502 to 512 (LFLQPLIGFFS) the chain is Extracellular.

Belongs to the ligand-gated ion channel (TC 1.A.9) family. Acetylcholine receptor (TC 1.A.9.1) subfamily. Alpha-3/CHRNA3 sub-subfamily. Neuronal AChR is composed of two different types of subunits: alpha and beta. CHRNA3/Alpha-3 subunit can be combined to CHRNB2/beta-2 or CHRNB4/beta-4 to give rise to functional receptors. As to expression, expressed in retina and brain.

It localises to the synaptic cell membrane. The protein localises to the cell membrane. Its subcellular location is the endoplasmic reticulum. It is found in the golgi apparatus. The enzyme catalyses K(+)(in) = K(+)(out). It carries out the reaction Na(+)(in) = Na(+)(out). It catalyses the reaction Ca(2+)(in) = Ca(2+)(out). With respect to regulation, activated by a myriad of ligands such as acetylcholine, cytisine, nicotine, choline and epibatidine. The heteropentamer CHRNA3:CHRNB2 activity is blocked by alpha-conotoxins ImI, ImII, PnIA, GID and MII. The heteropentamer CHRNA3:CHRNB4 activity is blocked by the alpha-conotoxin ImI and AuIB. In terms of biological role, component of neuronal acetylcholine receptors (nAChRs) that function as pentameric, ligand-gated cation channels with high calcium permeability among other activities. nAChRs are excitatory neurotrasnmitter receptors formed by a collection of nAChR subunits known to mediate synaptic transmission in the nervous system and the neuromuscular junction. Each nAchR subunit confers differential attributes to channel properties, including activation, deactivation and desensitization kinetics, pH sensitivity, cation permeability, and binding to allosteric modulators. CHRNA3 forms heteropentameric neuronal acetylcholine receptors with CHRNB2 and CHRNB4. CHRNA3:CHRNB4 being predominant in neurons of the autonomic ganglia, it is known as ganglionic nicotinic receptor. CHRNA3:CHRNB4 also plays an important role in the habenulo-interpeduncular tract, modulating the mesolimbic dopamine system and affecting reward circuits and addiction. Hypothalamic CHRNA3:CHRNB4 nAChR activation by nicotine leads to activation of POMC neurons and a decrease in food intake. Also expressed in the urothelium where it modulates reflex bladder activity by increasing intracellular calcium through extracellular influx and basal ATP release. This is Neuronal acetylcholine receptor subunit alpha-3 (chrna3) from Carassius auratus (Goldfish).